The sequence spans 94 residues: Protein translocase subunit SecE (94 aa).

A disordered region spans residues 1 to 32 (MTDAVGSIDMPDAQDEAPDSKKSRKGGKRGKK). Over residues 22–32 (KSRKGGKRGKK) the composition is skewed to basic residues. Residues 65–85 (TVVIIFVVIMIGLVTLIDYGF) traverse the membrane as a helical segment.

This sequence belongs to the SecE/SEC61-gamma family. Component of the Sec protein translocase complex. Heterotrimer consisting of SecY, SecE and SecG subunits. The heterotrimers can form oligomers, although 1 heterotrimer is thought to be able to translocate proteins. Interacts with the ribosome. Interacts with SecDF, and other proteins may be involved. Interacts with SecA.

The protein localises to the cell membrane. Its function is as follows. Essential subunit of the Sec protein translocation channel SecYEG. Clamps together the 2 halves of SecY. May contact the channel plug during translocation. This Streptomyces lividans protein is Protein translocase subunit SecE.